A 120-amino-acid polypeptide reads, in one-letter code: NAD(P)H-quinone oxidoreductase subunit 3 (120 aa).

3 helical membrane passes run 6-26, 64-84, and 89-109; these read GYDAFLGFLLISAAVPALALV, MFALVFVIFDVETVFLYPWAV, and LGLLAFIEALIFISILIVALA.

It belongs to the complex I subunit 3 family. In terms of assembly, NDH-1 can be composed of about 15 different subunits; different subcomplexes with different compositions have been identified which probably have different functions.

Its subcellular location is the cellular thylakoid membrane. The catalysed reaction is a plastoquinone + NADH + (n+1) H(+)(in) = a plastoquinol + NAD(+) + n H(+)(out). The enzyme catalyses a plastoquinone + NADPH + (n+1) H(+)(in) = a plastoquinol + NADP(+) + n H(+)(out). Its function is as follows. NDH-1 shuttles electrons from an unknown electron donor, via FMN and iron-sulfur (Fe-S) centers, to quinones in the respiratory and/or the photosynthetic chain. The immediate electron acceptor for the enzyme in this species is believed to be plastoquinone. Couples the redox reaction to proton translocation, and thus conserves the redox energy in a proton gradient. Cyanobacterial NDH-1 also plays a role in inorganic carbon-concentration. The chain is NAD(P)H-quinone oxidoreductase subunit 3 from Prochlorococcus marinus (strain SARG / CCMP1375 / SS120).